We begin with the raw amino-acid sequence, 328 residues long: 6-phosphogluconolactonase (328 aa).

Belongs to the cycloisomerase 2 family.

The catalysed reaction is 6-phospho-D-glucono-1,5-lactone + H2O = 6-phospho-D-gluconate + H(+). It functions in the pathway carbohydrate degradation; pentose phosphate pathway; D-ribulose 5-phosphate from D-glucose 6-phosphate (oxidative stage): step 2/3. Functionally, catalyzes the hydrolysis of 6-phosphogluconolactone to 6-phosphogluconate. The chain is 6-phosphogluconolactonase from Xenorhabdus nematophila (strain ATCC 19061 / DSM 3370 / CCUG 14189 / LMG 1036 / NCIMB 9965 / AN6).